The primary structure comprises 483 residues: Malonate-semialdehyde dehydrogenase 2 (483 aa).

NAD(+)-binding residues include Phe-152, Lys-176, Glu-179, Arg-180, and Ser-229. Cys-284 acts as the Nucleophile in catalysis. Glu-384 serves as a coordination point for NAD(+).

Belongs to the aldehyde dehydrogenase family. IolA subfamily. As to quaternary structure, homotetramer.

The enzyme catalyses 3-oxopropanoate + NAD(+) + CoA + H2O = hydrogencarbonate + acetyl-CoA + NADH + H(+). It carries out the reaction 2-methyl-3-oxopropanoate + NAD(+) + CoA + H2O = propanoyl-CoA + hydrogencarbonate + NADH + H(+). Its pathway is polyol metabolism; myo-inositol degradation into acetyl-CoA; acetyl-CoA from myo-inositol: step 7/7. In terms of biological role, catalyzes the oxidation of malonate semialdehyde (MSA) and methylmalonate semialdehyde (MMSA) into acetyl-CoA and propanoyl-CoA, respectively. Is involved in a myo-inositol catabolic pathway. Bicarbonate, and not CO2, is the end-product of the enzymatic reaction. This chain is Malonate-semialdehyde dehydrogenase 2, found in Geobacillus thermodenitrificans (strain NG80-2).